We begin with the raw amino-acid sequence, 457 residues long: Methylenetetrahydrofolate--tRNA-(uracil-5-)-methyltransferase TrmFO (457 aa).

Residue 12–17 (GGGLAG) coordinates FAD.

Belongs to the MnmG family. TrmFO subfamily. FAD serves as cofactor.

The protein resides in the cytoplasm. It carries out the reaction uridine(54) in tRNA + (6R)-5,10-methylene-5,6,7,8-tetrahydrofolate + NADH + H(+) = 5-methyluridine(54) in tRNA + (6S)-5,6,7,8-tetrahydrofolate + NAD(+). The enzyme catalyses uridine(54) in tRNA + (6R)-5,10-methylene-5,6,7,8-tetrahydrofolate + NADPH + H(+) = 5-methyluridine(54) in tRNA + (6S)-5,6,7,8-tetrahydrofolate + NADP(+). Catalyzes the folate-dependent formation of 5-methyl-uridine at position 54 (M-5-U54) in all tRNAs. This chain is Methylenetetrahydrofolate--tRNA-(uracil-5-)-methyltransferase TrmFO, found in Myxococcus xanthus (strain DK1622).